The primary structure comprises 168 residues: Endoribonuclease YbeY (168 aa).

3 residues coordinate Zn(2+): H123, H127, and H133.

The protein belongs to the endoribonuclease YbeY family. Zn(2+) serves as cofactor.

The protein localises to the cytoplasm. Single strand-specific metallo-endoribonuclease involved in late-stage 70S ribosome quality control and in maturation of the 3' terminus of the 16S rRNA. The sequence is that of Endoribonuclease YbeY from Francisella tularensis subsp. holarctica (strain LVS).